Reading from the N-terminus, the 243-residue chain is Adenosylcobinamide-GDP ribazoletransferase (243 aa).

The next 5 membrane-spanning stretches (helical) occupy residues leucine 31–leucine 51, leucine 57–leucine 77, isoleucine 109–isoleucine 129, isoleucine 135–threonine 155, and valine 188–tryptophan 208.

This sequence belongs to the CobS family. Requires Mg(2+) as cofactor.

The protein localises to the cell inner membrane. The catalysed reaction is alpha-ribazole + adenosylcob(III)inamide-GDP = adenosylcob(III)alamin + GMP + H(+). It carries out the reaction alpha-ribazole 5'-phosphate + adenosylcob(III)inamide-GDP = adenosylcob(III)alamin 5'-phosphate + GMP + H(+). Its pathway is cofactor biosynthesis; adenosylcobalamin biosynthesis; adenosylcobalamin from cob(II)yrinate a,c-diamide: step 7/7. Its function is as follows. Joins adenosylcobinamide-GDP and alpha-ribazole to generate adenosylcobalamin (Ado-cobalamin). Also synthesizes adenosylcobalamin 5'-phosphate from adenosylcobinamide-GDP and alpha-ribazole 5'-phosphate. The protein is Adenosylcobinamide-GDP ribazoletransferase of Pseudomonas savastanoi pv. phaseolicola (strain 1448A / Race 6) (Pseudomonas syringae pv. phaseolicola (strain 1448A / Race 6)).